The sequence spans 86 residues: U1-theraphotoxin-Pc1a (86 aa).

The signal sequence occupies residues 1 to 21 (MMRVLIVTAVFTFFLVLTSSG). Positions 22–49 (HDEDNEQRNILEGMFLDRAIETPKGLEE) are excised as a propeptide. 3 disulfide bridges follow: Cys-53/Cys-70, Cys-60/Cys-75, and Cys-69/Cys-80. Val-84 is modified (valine amide).

Expressed by the venom gland.

Its subcellular location is the secreted. Possesses strong antiplasmodial activity against the intra-erythrocyte stage of P.falciparum in vitro. IC(50) for inhibiting P.falciparum growth is 1.59 uM. Interacts with infected and healthy erythrocytes. Does not lyse erythrocytes, is not cytotoxic to nucleated mammalian cells, and does not inhibit neuromuscular function. Has neither antibacterial nor antifungal activity. The chain is U1-theraphotoxin-Pc1a from Psalmopoeus cambridgei (Trinidad chevron tarantula).